The following is a 95-amino-acid chain: Aspartyl/glutamyl-tRNA(Asn/Gln) amidotransferase subunit C (95 aa).

It belongs to the GatC family. In terms of assembly, heterotrimer of A, B and C subunits.

The catalysed reaction is L-glutamyl-tRNA(Gln) + L-glutamine + ATP + H2O = L-glutaminyl-tRNA(Gln) + L-glutamate + ADP + phosphate + H(+). It carries out the reaction L-aspartyl-tRNA(Asn) + L-glutamine + ATP + H2O = L-asparaginyl-tRNA(Asn) + L-glutamate + ADP + phosphate + 2 H(+). Its function is as follows. Allows the formation of correctly charged Asn-tRNA(Asn) or Gln-tRNA(Gln) through the transamidation of misacylated Asp-tRNA(Asn) or Glu-tRNA(Gln) in organisms which lack either or both of asparaginyl-tRNA or glutaminyl-tRNA synthetases. The reaction takes place in the presence of glutamine and ATP through an activated phospho-Asp-tRNA(Asn) or phospho-Glu-tRNA(Gln). The chain is Aspartyl/glutamyl-tRNA(Asn/Gln) amidotransferase subunit C from Hyphomonas neptunium (strain ATCC 15444).